The chain runs to 408 residues: DNA primase DnaG (408 aa).

Residues 166–241 (EEIIIVEGRA…KIDYIARAPP (76 aa)) form the Toprim domain. Residues Glu-172, Asp-215, and Asp-217 each coordinate Mg(2+).

It belongs to the archaeal DnaG primase family. Forms a ternary complex with MCM helicase and DNA. Component of the archaeal exosome complex. Requires Mg(2+) as cofactor.

The enzyme catalyses ssDNA + n NTP = ssDNA/pppN(pN)n-1 hybrid + (n-1) diphosphate.. Its function is as follows. RNA polymerase that catalyzes the synthesis of short RNA molecules used as primers for DNA polymerase during DNA replication. Also part of the exosome, which is a complex involved in RNA degradation. Acts as a poly(A)-binding protein that enhances the interaction between heteromeric, adenine-rich transcripts and the exosome. This is DNA primase DnaG from Desulfurococcus amylolyticus (strain DSM 18924 / JCM 16383 / VKM B-2413 / 1221n) (Desulfurococcus kamchatkensis).